The sequence spans 694 residues: Elongation factor G (694 aa).

The tr-type G domain occupies 9-288 (DAIRNIGIMA…VIVKWLPSPL (280 aa)). Residues 18–25 (AHIDAGKT), 82–86 (DTPGH), and 136–139 (NKMD) each bind GTP.

This sequence belongs to the TRAFAC class translation factor GTPase superfamily. Classic translation factor GTPase family. EF-G/EF-2 subfamily.

Its subcellular location is the cytoplasm. Functionally, catalyzes the GTP-dependent ribosomal translocation step during translation elongation. During this step, the ribosome changes from the pre-translocational (PRE) to the post-translocational (POST) state as the newly formed A-site-bound peptidyl-tRNA and P-site-bound deacylated tRNA move to the P and E sites, respectively. Catalyzes the coordinated movement of the two tRNA molecules, the mRNA and conformational changes in the ribosome. In Chlamydia muridarum (strain MoPn / Nigg), this protein is Elongation factor G (fusA).